A 312-amino-acid chain; its full sequence is Phospholipid phosphatase 3 (312 aa).

Residues 1–33 (MQSYKYDKAIVPESKNGGSPALNNNPRKGGSKR) lie on the Cytoplasmic side of the membrane. Ser19 carries the phosphoserine modification. A helical membrane pass occupies residues 34-54 (VLLICLDLFCLFMAALPFLII). Topologically, residues 55 to 85 (ETSTIKPYRRGFYCNDESIKYPLKVSETIND) are extracellular. A helical membrane pass occupies residues 86–106 (AVLCAVGIVIAILAIITGEFY). Residues 107–123 (RIYYLKEKSRSTTQNPY) are Cytoplasmic-facing. Residues 109–110 (YY) carry the Dityrosine basolateral targeting motif motif. Residues 124–144 (VAALYKQVGCFLFGCAISQSF) form a helical membrane-spanning segment. The Extracellular portion of the chain corresponds to 145-194 (TDIAKVSIGRLRPHFLSVCDPDFSQINCSEGYIQNYRCRGEDSKVQEARK). Positions 149-157 (KVSIGRLRP) are phosphatase sequence motif I. N-linked (GlcNAc...) asparagine glycosylation is present at Asn171. The short motif at 183–185 (RGE) is the Integrin-binding motif element. The helical transmembrane segment at 195 to 215 (SFFSGHASFSMFTMLYLVLYL) threads the bilayer. The segment at 197–200 (FSGH) is phosphatase sequence motif II. The Proton donors role is filled by His200. Residues 216-226 (QARFTWRGARL) are Cytoplasmic-facing. A helical membrane pass occupies residues 227 to 244 (LRPLLQFTLLMMAFYTGL). A phosphatase sequence motif III region spans residues 245-256 (SRVSDYKHHPSD). Residues 245–258 (SRVSDYKHHPSDVL) are Extracellular-facing. The active-site Nucleophile is the His252. A helical transmembrane segment spans residues 259–279 (AGFAQGALVACCIVFFVSDLF). The interval 276–312 (SDLFKTKTSLSLPAPAIRREILSPVDIIDRNNHHNMV) is mediates interaction with CTNND1. At 280-312 (KTKTSLSLPAPAIRREILSPVDIIDRNNHHNMV) the chain is on the cytoplasmic side.

The protein belongs to the PA-phosphatase related phosphoesterase family. Forms functional homodimers and homooligomers that are not required for substrate recognition and catalytic activity. Can also form heterooligomers with other PLPP2 and PLPP3. Interacts with CTNND1; negatively regulates the PLPP3-mediated stabilization of beta-catenin/CTNNB1. N-glycosylated. Contains high-mannose oligosaccharides. As to expression, detected in lung, cerebellum and heart atrium.

It is found in the cell membrane. Its subcellular location is the basolateral cell membrane. The protein localises to the endoplasmic reticulum membrane. The protein resides in the endoplasmic reticulum-Golgi intermediate compartment membrane. It localises to the golgi apparatus membrane. It is found in the golgi apparatus. Its subcellular location is the trans-Golgi network membrane. The protein localises to the membrane raft. It carries out the reaction a 1,2-diacyl-sn-glycero-3-phosphate + H2O = a 1,2-diacyl-sn-glycerol + phosphate. It catalyses the reaction 1,2-dihexadecanoyl-sn-glycero-3-phosphate + H2O = 1,2-dihexadecanoyl-sn-glycerol + phosphate. The enzyme catalyses 1,2-di-(9Z-octadecenoyl)-sn-glycero-3-phosphate + H2O = 1,2-di-(9Z-octadecenoyl)-sn-glycerol + phosphate. The catalysed reaction is a monoacyl-sn-glycero-3-phosphate + H2O = a monoacylglycerol + phosphate. It carries out the reaction (9Z)-octadecenoyl-sn-glycero-3-phosphate + H2O = (9Z-octadecenoyl)-glycerol + phosphate. It catalyses the reaction sphing-4-enine 1-phosphate + H2O = sphing-4-enine + phosphate. The enzyme catalyses an N-acylsphing-4-enine 1-phosphate + H2O = an N-acylsphing-4-enine + phosphate. The catalysed reaction is N-(octanoyl)-sphing-4-enine-1-phosphate + H2O = N-octanoylsphing-4-enine + phosphate. It carries out the reaction N-(9Z-octadecenoyl)-ethanolamine phosphate + H2O = N-(9Z-octadecenoyl) ethanolamine + phosphate. The protein operates within lipid metabolism; phospholipid metabolism. Magnesium-independent phospholipid phosphatase. Insensitive to N-ethylmaleimide. Its function is as follows. Magnesium-independent phospholipid phosphatase of the plasma membrane that catalyzes the dephosphorylation of a variety of glycerolipid and sphingolipid phosphate esters including phosphatidate/PA, lysophosphatidate/LPA, diacylglycerol pyrophosphate/DGPP, sphingosine 1-phosphate/S1P and ceramide 1-phosphate/C1P. Also acts on N-oleoyl ethanolamine phosphate/N-(9Z-octadecenoyl)-ethanolamine phosphate, a potential physiological compound. Has both an extracellular and an intracellular phosphatase activity, allowing the hydrolysis and the cellular uptake of these bioactive lipid mediators from the milieu, regulating signal transduction in different cellular processes. Through the dephosphorylation of extracellular sphingosine-1-phosphate and the regulation of its extra- and intracellular availability, plays a role in vascular homeostasis, regulating endothelial cell migration, adhesion, survival, proliferation and the production of pro-inflammatory cytokines. By maintaining the appropriate levels of this lipid in the cerebellum, also ensure its proper development and function. Through its intracellular lipid phosphatase activity may act in early compartments of the secretory pathway, regulating the formation of Golgi to endoplasmic reticulum retrograde transport carriers. Independently of this phosphatase activity may also function in the Wnt signaling pathway and the stabilization of beta-catenin/CTNNB1, thereby regulating cell proliferation, migration and differentiation in angiogenesis or yet in tumor growth. Also plays a role in integrin-mediated cell-cell adhesion in angiogenesis. The protein is Phospholipid phosphatase 3 of Mus musculus (Mouse).